The chain runs to 239 residues: MATPHISAAPGDFADVVLMPGDPLRARYISDRFLEGAREVTSVRNMLGFTGTFRGRRVSVMGHGMGVPSISIYATELIKTYGVRVIIRVGSCGALSTDVKVREVIVATGAGTDSNVNRMRLMGHDFAAVADFTLARRAMEAAERRNKPVRAGPVFTSDLFYHPQEQLNATLARMGVLAVEMEVAGLYGVAAESGARALGLLTVSDHIITGESLTPQERQTTFDEMIELALDVAHAEPTP.

Position 5 (H5) interacts with a purine D-ribonucleoside. Residues G21, R25, R44, and 88-91 (RVGS) contribute to the phosphate site. A purine D-ribonucleoside-binding positions include 180 to 182 (EME) and 204 to 205 (SD). The Proton donor role is filled by D205.

The protein belongs to the PNP/UDP phosphorylase family. As to quaternary structure, homohexamer; trimer of homodimers.

The enzyme catalyses a purine D-ribonucleoside + phosphate = a purine nucleobase + alpha-D-ribose 1-phosphate. The catalysed reaction is a purine 2'-deoxy-D-ribonucleoside + phosphate = a purine nucleobase + 2-deoxy-alpha-D-ribose 1-phosphate. Its function is as follows. Catalyzes the reversible phosphorolytic breakdown of the N-glycosidic bond in the beta-(deoxy)ribonucleoside molecules, with the formation of the corresponding free purine bases and pentose-1-phosphate. The sequence is that of Purine nucleoside phosphorylase DeoD-type from Myxococcus xanthus (strain DK1622).